A 361-amino-acid polypeptide reads, in one-letter code: Peptide chain release factor 1 (361 aa).

Glutamine 238 carries the N5-methylglutamine modification.

The protein belongs to the prokaryotic/mitochondrial release factor family. In terms of processing, methylated by PrmC. Methylation increases the termination efficiency of RF1.

It is found in the cytoplasm. Its function is as follows. Peptide chain release factor 1 directs the termination of translation in response to the peptide chain termination codons UAG and UAA. This chain is Peptide chain release factor 1, found in Mesomycoplasma hyopneumoniae (strain 7448) (Mycoplasma hyopneumoniae).